The sequence spans 1456 residues: Leucine-rich repeat-containing protein 9 (1456 aa).

LRR repeat units follow at residues 53–78 (FHNL…CLQL), 97–119 (CRNL…LEKL), 120–141 (IKLE…LQTL), 142–164 (KNLK…LDPN), 166–188 (QLEK…NLTK), 190–212 (TRLK…QLCN), 224–248 (LQRL…AMKK), and 264–287 (NEEL…RIKL). A disordered region spans residues 305–325 (SSKGQSDTTPEAEKPRNSEVV). One copy of the LRR 9 repeat lies at 339–362 (LSALDDRVTFWNKKLHEIEAIYRT). The residue at position 525 (Y525) is a Phosphotyrosine. LRR repeat units lie at residues 661 to 683 (KPRP…TNIY), 684 to 705 (SHIV…LAKL), 706 to 727 (TGLR…VYHL), 729 to 748 (NLEY…GFRG), 749 to 772 (LMKL…INVL), 776 to 802 (TTSL…VIGR), 806 to 833 (LTHL…KITQ), 876 to 898 (YSKI…LEKL), 899 to 920 (ENLK…LESC), 921 to 942 (VNLE…ITRL), 943 to 965 (TKLS…TFDN), 967 to 991 (LHLH…TFTL), 993 to 1010 (ELYI…IYNL), 1013 to 1037 (LCNL…RFFV), 1082 to 1105 (FIQM…PVDH), 1106 to 1128 (FRNV…LIYL), 1129 to 1151 (PNVK…LKPQ), 1191 to 1214 (MQSL…QLNR), 1215 to 1237 (LRNL…LDNL), 1238 to 1260 (IVLQ…AFSK), 1262 to 1283 (SSLL…LQSL), 1284 to 1307 (VKLE…KLDV), and 1309 to 1335 (PSLR…IFRL).

The sequence is that of Leucine-rich repeat-containing protein 9 (Lrrc9) from Mus musculus (Mouse).